Reading from the N-terminus, the 66-residue chain is MSQEKLKSKVEQASGSLKEGAGKLTGDKELEAKGFVEKTIAKGKELADDAKDAVEEAVDVVKEKLK.

The span at 1–10 (MSQEKLKSKV) shows a compositional bias: basic and acidic residues. The disordered stretch occupies residues 1 to 23 (MSQEKLKSKVEQASGSLKEGAGK).

It belongs to the UPF0337 (CsbD) family.

This chain is UPF0337 protein SAG0606, found in Streptococcus agalactiae serotype V (strain ATCC BAA-611 / 2603 V/R).